Reading from the N-terminus, the 728-residue chain is Catalase-peroxidase (728 aa).

Positions 91–218 (WHSAGTYRIA…LAAVQMGLIY (128 aa)) form a cross-link, tryptophyl-tyrosyl-methioninium (Trp-Tyr) (with M-244). His92 acts as the Proton acceptor in catalysis. The segment at residues 218 to 244 (YVNPEGPDGNPDPVAAARDIRETFARM) is a cross-link (tryptophyl-tyrosyl-methioninium (Tyr-Met) (with W-91)). Heme b is bound at residue His259.

This sequence belongs to the peroxidase family. Peroxidase/catalase subfamily. Homodimer or homotetramer. Heme b serves as cofactor. Post-translationally, formation of the three residue Trp-Tyr-Met cross-link is important for the catalase, but not the peroxidase activity of the enzyme.

It carries out the reaction H2O2 + AH2 = A + 2 H2O. The enzyme catalyses 2 H2O2 = O2 + 2 H2O. In terms of biological role, bifunctional enzyme with both catalase and broad-spectrum peroxidase activity. The chain is Catalase-peroxidase from Burkholderia multivorans (strain ATCC 17616 / 249).